Consider the following 267-residue polypeptide: Ribosomal RNA small subunit methyltransferase A (267 aa).

N12, I14, G39, E60, D84, and N110 together coordinate S-adenosyl-L-methionine.

The protein belongs to the class I-like SAM-binding methyltransferase superfamily. rRNA adenine N(6)-methyltransferase family. RsmA subfamily.

The protein localises to the cytoplasm. The catalysed reaction is adenosine(1518)/adenosine(1519) in 16S rRNA + 4 S-adenosyl-L-methionine = N(6)-dimethyladenosine(1518)/N(6)-dimethyladenosine(1519) in 16S rRNA + 4 S-adenosyl-L-homocysteine + 4 H(+). Specifically dimethylates two adjacent adenosines (A1518 and A1519) in the loop of a conserved hairpin near the 3'-end of 16S rRNA in the 30S particle. May play a critical role in biogenesis of 30S subunits. This Mesoplasma florum (strain ATCC 33453 / NBRC 100688 / NCTC 11704 / L1) (Acholeplasma florum) protein is Ribosomal RNA small subunit methyltransferase A.